A 101-amino-acid chain; its full sequence is Replication restart protein PriB (101 aa).

The 101-residue stretch at 1–101 (MTTNNLVLAG…LHAENVELKT (101 aa)) folds into the SSB domain.

The protein belongs to the PriB family. In terms of assembly, homodimer. Interacts with PriA and DnaT. Component of the replication restart primosome. Primosome assembly occurs via a 'hand-off' mechanism. PriA binds to replication forks, subsequently PriB then DnaT bind; DnaT then displaces ssDNA to generate the helicase loading substrate.

Involved in the restart of stalled replication forks, which reloads the replicative helicase on sites other than the origin of replication; the PriA-PriB pathway is the major replication restart pathway. During primosome assembly it facilitates complex formation between PriA and DnaT on DNA; stabilizes PriA on DNA. Stimulates the DNA unwinding activity of PriA helicase. The polypeptide is Replication restart protein PriB (Shewanella halifaxensis (strain HAW-EB4)).